Here is a 232-residue protein sequence, read N- to C-terminus: NAD(P)H-quinone oxidoreductase subunit K 1 (232 aa).

[4Fe-4S] cluster is bound by residues Cys-49, Cys-50, Cys-114, and Cys-145.

Belongs to the complex I 20 kDa subunit family. As to quaternary structure, NDH-1 can be composed of about 15 different subunits; different subcomplexes with different compositions have been identified which probably have different functions. [4Fe-4S] cluster is required as a cofactor.

It is found in the cell inner membrane. It carries out the reaction a plastoquinone + NADH + (n+1) H(+)(in) = a plastoquinol + NAD(+) + n H(+)(out). The catalysed reaction is a plastoquinone + NADPH + (n+1) H(+)(in) = a plastoquinol + NADP(+) + n H(+)(out). In terms of biological role, NDH-1 shuttles electrons from an unknown electron donor, via FMN and iron-sulfur (Fe-S) centers, to quinones in the respiratory and/or the photosynthetic chain. The immediate electron acceptor for the enzyme in this species is believed to be plastoquinone. Couples the redox reaction to proton translocation, and thus conserves the redox energy in a proton gradient. Cyanobacterial NDH-1 also plays a role in inorganic carbon-concentration. This is NAD(P)H-quinone oxidoreductase subunit K 1 from Gloeobacter violaceus (strain ATCC 29082 / PCC 7421).